We begin with the raw amino-acid sequence, 92 residues long: Small ribosomal subunit protein uS19 (92 aa).

This sequence belongs to the universal ribosomal protein uS19 family.

In terms of biological role, protein S19 forms a complex with S13 that binds strongly to the 16S ribosomal RNA. The chain is Small ribosomal subunit protein uS19 from Corynebacterium diphtheriae (strain ATCC 700971 / NCTC 13129 / Biotype gravis).